Consider the following 342-residue polypeptide: Autoinducer 2 import system permease protein LsrC (342 aa).

At 1–13 (MLKFIQNNREITA) the chain is on the periplasmic side. The chain crosses the membrane as a helical span at residues 14–34 (LLAVVLLFVLPGFLDRQYLSV). The Cytoplasmic segment spans residues 35 to 38 (QTLT). The chain crosses the membrane as a helical span at residues 39 to 59 (MVYSSAQILILLAMGATLVML). The Periplasmic portion of the chain corresponds to 60 to 69 (TRNIDVSVGS). The chain crosses the membrane as a helical span at residues 70–90 (ITGMCAVLLGMLLNAGYSLPV). The Cytoplasmic segment spans residues 91–92 (AC). A helical transmembrane segment spans residues 93-113 (VATLLLGLLAGFFNGVLVAWL). Residue Lys114 is a topological domain, periplasmic. A helical membrane pass occupies residues 115–135 (IPAIVATLGTLGLYRGIMLLW). The Cytoplasmic portion of the chain corresponds to 136–154 (TGGKWIEGLPAELKQLSAP). Residues 155 to 175 (LLFGVSAIGWLTIILVAFMAW) traverse the membrane as a helical segment. Residues 176–212 (LLAKTAFGRSFYVTGDNLQGARQLGVRTEAIRIVAFS) are Periplasmic-facing. A helical membrane pass occupies residues 213 to 233 (LNGCMAALAGIVFASQIGFIP). Residues 234-251 (NQTGTGLEMKAIAACVLG) lie on the Cytoplasmic side of the membrane. A helical membrane pass occupies residues 252-272 (GISLLGGSGAIIGAVLGAWFL). The Periplasmic portion of the chain corresponds to 273-283 (TQIDSVLVLLR). Residues 284 to 304 (IPAWWNDFIAGMVLLAVLVFD) traverse the membrane as a helical segment. Residues 305–342 (GRLRCALERNLRRQKYARFMMPPPPVKPASSGKKREAA) lie on the Cytoplasmic side of the membrane.

Belongs to the binding-protein-dependent transport system permease family. AraH/RbsC subfamily. As to quaternary structure, the complex is composed of two ATP-binding proteins (LsrA), two transmembrane proteins (LsrC and LsrD) and a solute-binding protein (LsrB).

Its subcellular location is the cell inner membrane. In terms of biological role, part of the ABC transporter complex LsrABCD involved in autoinducer 2 (AI-2) import. Probably responsible for the translocation of the substrate across the membrane. The chain is Autoinducer 2 import system permease protein LsrC (lsrC) from Escherichia coli (strain SMS-3-5 / SECEC).